The primary structure comprises 266 residues: Small ribosomal subunit protein uS2 (266 aa).

Belongs to the universal ribosomal protein uS2 family.

The sequence is that of Small ribosomal subunit protein uS2 from Bartonella tribocorum (strain CIP 105476 / IBS 506).